We begin with the raw amino-acid sequence, 310 residues long: tRNA dimethylallyltransferase (310 aa).

Position 13–20 (13–20 (GPTASGKT)) interacts with ATP. Position 15–20 (15–20 (TASGKT)) interacts with substrate. 4 interaction with substrate tRNA regions span residues 38–41 (DSAL), 162–166 (QRLSR), 243–248 (RCVGYR), and 276–283 (KRQITWLR).

The protein belongs to the IPP transferase family. As to quaternary structure, monomer. The cofactor is Mg(2+).

It carries out the reaction adenosine(37) in tRNA + dimethylallyl diphosphate = N(6)-dimethylallyladenosine(37) in tRNA + diphosphate. In terms of biological role, catalyzes the transfer of a dimethylallyl group onto the adenine at position 37 in tRNAs that read codons beginning with uridine, leading to the formation of N6-(dimethylallyl)adenosine (i(6)A). This is tRNA dimethylallyltransferase from Vibrio campbellii (strain ATCC BAA-1116).